The following is a 267-amino-acid chain: uncharacterized protein (267 aa).

The disordered stretch occupies residues 1–55 (MTEERKETFEEEINQSERIDADEEPLSRMSRKASRQSKQKQKQKQKPRQERGEST). A compositionally biased stretch (acidic residues) spans 9–24 (FEEEINQSERIDADEE). The span at 29-46 (MSRKASRQSKQKQKQKQK) shows a compositional bias: basic residues. Transmembrane regions (helical) follow at residues 93–115 (YKYGLISMLIFSIIFSIGNWFQL), 135–157 (GFLVVLVYLLIFFAVMVFAIWAV), 173–195 (AVLGSLLVPVIAVSILWLIFAIV), 199–221 (MLTVLFTVLILFSIFFIIALYVQ), and 234–256 (YIYCVFAVVAIALLFTAVTWPFI).

The protein localises to the cell membrane. This is an uncharacterized protein from Bacillus subtilis (strain 168).